We begin with the raw amino-acid sequence, 235 residues long: Large ribosomal subunit protein uL1c (235 aa).

The protein belongs to the universal ribosomal protein uL1 family. As to quaternary structure, part of the 50S ribosomal subunit.

The protein localises to the plastid. It localises to the chloroplast. In terms of biological role, binds directly to 23S rRNA. Might be involved in E site tRNA release (Potential). This is Large ribosomal subunit protein uL1c (rpl1) from Gracilaria tenuistipitata var. liui (Red alga).